Consider the following 298-residue polypeptide: 33 kDa chaperonin (298 aa).

Cystine bridges form between C239–C241 and C272–C275.

The protein belongs to the HSP33 family. Post-translationally, under oxidizing conditions two disulfide bonds are formed involving the reactive cysteines. Under reducing conditions zinc is bound to the reactive cysteines and the protein is inactive.

The protein localises to the cytoplasm. Functionally, redox regulated molecular chaperone. Protects both thermally unfolding and oxidatively damaged proteins from irreversible aggregation. Plays an important role in the bacterial defense system toward oxidative stress. In Picosynechococcus sp. (strain ATCC 27264 / PCC 7002 / PR-6) (Agmenellum quadruplicatum), this protein is 33 kDa chaperonin.